The sequence spans 306 residues: Curved DNA-binding protein (306 aa).

The J domain maps to 5-69; it reads DYYAIMGVKP…QRRAEYDQMW (65 aa).

Its subcellular location is the cytoplasm. It is found in the nucleoid. DNA-binding protein that preferentially recognizes a curved DNA sequence. It is probably a functional analog of DnaJ; displays overlapping activities with DnaJ, but functions under different conditions, probably acting as a molecular chaperone in an adaptive response to environmental stresses other than heat shock. Lacks autonomous chaperone activity; binds native substrates and targets them for recognition by DnaK. Its activity is inhibited by the binding of CbpM. This Escherichia coli O127:H6 (strain E2348/69 / EPEC) protein is Curved DNA-binding protein.